We begin with the raw amino-acid sequence, 225 residues long: Holliday junction branch migration complex subunit RuvA (225 aa).

Residues 1-71 (MISWINGELV…EDSDLLFGFT (71 aa)) are domain I. Residues 72–150 (SKDQKFFFIE…SKIQIEEEKG (79 aa)) form a domain II region. The flexible linker stretch occupies residues 151-161 (QEEFEITNPEI). Residues 161–225 (IYKLMEDLQL…LDQGNSNLAR (65 aa)) form a domain III region.

Belongs to the RuvA family. Homotetramer. Forms an RuvA(8)-RuvB(12)-Holliday junction (HJ) complex. HJ DNA is sandwiched between 2 RuvA tetramers; dsDNA enters through RuvA and exits via RuvB. An RuvB hexamer assembles on each DNA strand where it exits the tetramer. Each RuvB hexamer is contacted by two RuvA subunits (via domain III) on 2 adjacent RuvB subunits; this complex drives branch migration. In the full resolvosome a probable DNA-RuvA(4)-RuvB(12)-RuvC(2) complex forms which resolves the HJ.

Its subcellular location is the cytoplasm. In terms of biological role, the RuvA-RuvB-RuvC complex processes Holliday junction (HJ) DNA during genetic recombination and DNA repair, while the RuvA-RuvB complex plays an important role in the rescue of blocked DNA replication forks via replication fork reversal (RFR). RuvA specifically binds to HJ cruciform DNA, conferring on it an open structure. The RuvB hexamer acts as an ATP-dependent pump, pulling dsDNA into and through the RuvAB complex. HJ branch migration allows RuvC to scan DNA until it finds its consensus sequence, where it cleaves and resolves the cruciform DNA. The polypeptide is Holliday junction branch migration complex subunit RuvA (Prochlorococcus marinus (strain MIT 9215)).